The primary structure comprises 123 residues: uncharacterized protein (123 aa).

An N-terminal signal peptide occupies residues 1 to 24 (MLPLCLTFLSFFLSLGGSFKAVMT). 2 helical membrane-spanning segments follow: residues 39-59 (FWIFNWTVTLIPLNSLVALAI) and 101-121 (FGGILTIDLSFYWALGVALTG).

The protein resides in the membrane. This is an uncharacterized protein from Saccharomyces cerevisiae (strain ATCC 204508 / S288c) (Baker's yeast).